The following is a 153-amino-acid chain: Endoribonuclease RegB (153 aa).

Activity is stimulated 10- to 100-fold by host ribosomal protein S1, which also helps confer substrate choice. Essential to the early nucleolytic processing of a number of T4 messenger RNAs. Specifically cleaves after the GG dinucleotide GGAG within consensus 5'-GGAGRAYARAA-3' (R is a purine and Y is a pyrimidine) sequences found mainly in translation initiation sites. The protein is Endoribonuclease RegB (regB) of Enterobacteria phage T4 (Bacteriophage T4).